The sequence spans 1393 residues: DNA-directed RNA polymerase subunit beta (1393 aa).

Belongs to the RNA polymerase beta chain family. The RNAP catalytic core consists of 2 alpha, 1 beta, 1 beta' and 1 omega subunit. When a sigma factor is associated with the core the holoenzyme is formed, which can initiate transcription.

It catalyses the reaction RNA(n) + a ribonucleoside 5'-triphosphate = RNA(n+1) + diphosphate. In terms of biological role, DNA-dependent RNA polymerase catalyzes the transcription of DNA into RNA using the four ribonucleoside triphosphates as substrates. The chain is DNA-directed RNA polymerase subunit beta from Rhodospirillum rubrum (strain ATCC 11170 / ATH 1.1.1 / DSM 467 / LMG 4362 / NCIMB 8255 / S1).